A 65-amino-acid chain; its full sequence is DNA-directed RNA polymerase subunit Rpo10 (65 aa).

Zn(2+)-binding residues include Cys-7, Cys-10, Cys-44, and Cys-45.

The protein belongs to the archaeal Rpo10/eukaryotic RPB10 RNA polymerase subunit family. Part of the RNA polymerase complex. The cofactor is Zn(2+).

The protein localises to the cytoplasm. It carries out the reaction RNA(n) + a ribonucleoside 5'-triphosphate = RNA(n+1) + diphosphate. DNA-dependent RNA polymerase (RNAP) catalyzes the transcription of DNA into RNA using the four ribonucleoside triphosphates as substrates. This is DNA-directed RNA polymerase subunit Rpo10 from Pyrobaculum arsenaticum (strain DSM 13514 / JCM 11321 / PZ6).